Consider the following 167-residue polypeptide: Protein-export protein SecB (167 aa).

Residues 1-20 (MASNDDAPVGAANGNGNTGA) are disordered.

The protein belongs to the SecB family. As to quaternary structure, homotetramer, a dimer of dimers. One homotetramer interacts with 1 SecA dimer.

The protein resides in the cytoplasm. One of the proteins required for the normal export of preproteins out of the cell cytoplasm. It is a molecular chaperone that binds to a subset of precursor proteins, maintaining them in a translocation-competent state. It also specifically binds to its receptor SecA. The sequence is that of Protein-export protein SecB from Mesorhizobium japonicum (strain LMG 29417 / CECT 9101 / MAFF 303099) (Mesorhizobium loti (strain MAFF 303099)).